We begin with the raw amino-acid sequence, 441 residues long: GTPase Der (441 aa).

2 consecutive EngA-type G domains span residues 4-168 (PVVA…PEDI) and 177-352 (IRIA…EQNS). GTP-binding positions include 10-17 (GRPNVGKS), 57-61 (DTGGI), 121-124 (NKVE), 183-190 (GRPNVGKS), 230-234 (DTAGM), and 295-298 (NKWD). One can recognise a KH-like domain in the interval 353-437 (TRVATATLNT…PIRMIVRQKD (85 aa)).

Belongs to the TRAFAC class TrmE-Era-EngA-EngB-Septin-like GTPase superfamily. EngA (Der) GTPase family. In terms of assembly, associates with the 50S ribosomal subunit.

Functionally, GTPase that plays an essential role in the late steps of ribosome biogenesis. The chain is GTPase Der from Desulfitobacterium hafniense (strain DSM 10664 / DCB-2).